We begin with the raw amino-acid sequence, 341 residues long: Putative MAGE domain-containing protein MAGEA13P (341 aa).

Disordered regions lie at residues 1 to 21 and 78 to 101; these read MPHSQKSRHCELEQGLQAPKE and KATPWNQSDESSRSQEKKDPGASQ. Basic and acidic residues predominate over residues 87-97; that stretch reads ESSRSQEKKDP. Positions 105-304 constitute an MAGE domain; sequence LEKKVDELVK…SSFPLLYEEA (200 aa).

This Homo sapiens (Human) protein is Putative MAGE domain-containing protein MAGEA13P (MAGEA13P).